The sequence spans 448 residues: MPLIIVALGILALLFLIMGLKLNTFISLLVVSFGVALALGMPFDKVVSSIEAGIGGTLGHIALIFGLGAMLGKLIADSGGAQRIAMTLVNKFGEKNIQWAVVIASFIIGIALFFEVGLVLLIPIVFAISRELKISILFLGIPMVAALSVTHGFLPPHPGPTAIAGEYGANIGEVLLYGFIVAVPTVLIAGPLFTKFAKKIVPASFAKNGNIASLGTQKTFNLEETPGFGISVFTAMLPIIIMSVATIIDLLQETIGFADNGVLAFIRLIGNASTAMIISLLVAVYTMGIKRNIPVKTVMDSCSTAISQIGMMLLIIGGGGAFKQVLINGGVGDYVADLFKGTALSPIILAWLIAAILRISLGSATVAALSTTGLVIPLLGHSDVNLALVVLATGAGSVIASHVNDAGFWMFKEYFGLSMKETFATWTLLETIISVAGLGFILLLSLVV.

12 helical membrane-spanning segments follow: residues 2–22 (PLII…GLKL), 23–43 (NTFI…GMPF), 52–72 (AGIG…AMLG), 106–126 (FIIG…PIVF), 134–154 (ISIL…HGFL), 174–194 (VLLY…PLFT), 228–248 (FGIS…ATII), 269–289 (IGNA…TMGI), 302–322 (CSTA…GGAF), 347–367 (IILA…ATVA), 373–393 (GLVI…VLAT), and 428–448 (LLET…SLVV).

This sequence belongs to the GntP permease family.

The protein resides in the cell membrane. The protein operates within carbohydrate acid metabolism; D-gluconate degradation. This is Gluconate permease (gntP) from Bacillus subtilis (strain 168).